The sequence spans 265 residues: Hydroxyethylthiazole kinase (265 aa).

Residue M44 coordinates substrate. ATP-binding residues include K120 and S166. G193 contributes to the substrate binding site.

It belongs to the Thz kinase family. It depends on Mg(2+) as a cofactor.

The catalysed reaction is 5-(2-hydroxyethyl)-4-methylthiazole + ATP = 4-methyl-5-(2-phosphooxyethyl)-thiazole + ADP + H(+). It participates in cofactor biosynthesis; thiamine diphosphate biosynthesis; 4-methyl-5-(2-phosphoethyl)-thiazole from 5-(2-hydroxyethyl)-4-methylthiazole: step 1/1. Functionally, catalyzes the phosphorylation of the hydroxyl group of 4-methyl-5-beta-hydroxyethylthiazole (THZ). The sequence is that of Hydroxyethylthiazole kinase from Methanosphaerula palustris (strain ATCC BAA-1556 / DSM 19958 / E1-9c).